Reading from the N-terminus, the 149-residue chain is Transcriptional repressor NrdR (149 aa).

A zinc finger lies at 3–34 (CPFCSAVDTKVIDSRLVGEGSQVRRRRQCLVC). The ATP-cone domain occupies 49 to 139 (PRVIKSNEVR…VYRSFEDIRE (91 aa)).

It belongs to the NrdR family. It depends on Zn(2+) as a cofactor.

Its function is as follows. Negatively regulates transcription of bacterial ribonucleotide reductase nrd genes and operons by binding to NrdR-boxes. This is Transcriptional repressor NrdR from Pectobacterium carotovorum subsp. carotovorum (strain PC1).